The sequence spans 321 residues: Ribosomal RNA small subunit methyltransferase H (321 aa).

S-adenosyl-L-methionine contacts are provided by residues 43–45, aspartate 63, phenylalanine 89, aspartate 110, and glutamine 117; that span reads GGH. Residues 286–321 are disordered; that stretch reads HPAGKALRAGPRETRDNPRSRSAVLRVAERSERHAA. Composition is skewed to basic and acidic residues over residues 295–304 and 312–321; these read GPRETRDNPR and VAERSERHAA.

This sequence belongs to the methyltransferase superfamily. RsmH family.

The protein localises to the cytoplasm. The enzyme catalyses cytidine(1402) in 16S rRNA + S-adenosyl-L-methionine = N(4)-methylcytidine(1402) in 16S rRNA + S-adenosyl-L-homocysteine + H(+). Specifically methylates the N4 position of cytidine in position 1402 (C1402) of 16S rRNA. In Acidithiobacillus ferrooxidans (strain ATCC 23270 / DSM 14882 / CIP 104768 / NCIMB 8455) (Ferrobacillus ferrooxidans (strain ATCC 23270)), this protein is Ribosomal RNA small subunit methyltransferase H.